The following is a 213-amino-acid chain: Peptide methionine sulfoxide reductase MsrA (213 aa).

Cysteine 53 is a catalytic residue.

Belongs to the MsrA Met sulfoxide reductase family.

The enzyme catalyses L-methionyl-[protein] + [thioredoxin]-disulfide + H2O = L-methionyl-(S)-S-oxide-[protein] + [thioredoxin]-dithiol. The catalysed reaction is [thioredoxin]-disulfide + L-methionine + H2O = L-methionine (S)-S-oxide + [thioredoxin]-dithiol. Functionally, has an important function as a repair enzyme for proteins that have been inactivated by oxidation. Catalyzes the reversible oxidation-reduction of methionine sulfoxide in proteins to methionine. In Serratia proteamaculans (strain 568), this protein is Peptide methionine sulfoxide reductase MsrA.